A 513-amino-acid chain; its full sequence is Histidine ammonia-lyase (513 aa).

A cross-link (5-imidazolinone (Ala-Gly)) is located at residues 146 to 148 (ASG). The residue at position 147 (serine 147) is a 2,3-didehydroalanine (Ser).

This sequence belongs to the PAL/histidase family. Contains an active site 4-methylidene-imidazol-5-one (MIO), which is formed autocatalytically by cyclization and dehydration of residues Ala-Ser-Gly.

It localises to the cytoplasm. The catalysed reaction is L-histidine = trans-urocanate + NH4(+). It participates in amino-acid degradation; L-histidine degradation into L-glutamate; N-formimidoyl-L-glutamate from L-histidine: step 1/3. The sequence is that of Histidine ammonia-lyase from Caulobacter vibrioides (strain NA1000 / CB15N) (Caulobacter crescentus).